Reading from the N-terminus, the 521-residue chain is Histone deacetylase HDAC1 (521 aa).

Residues 7-319 (KRVCYYYDSD…WTYETSVALA (313 aa)) are histone deacetylase. His139 is a catalytic residue. The disordered stretch occupies residues 376 to 521 (GVQIQAIPED…GAKGAKENNI (146 aa)). Residues 386-395 (AINDESDDED) are compositionally biased toward acidic residues. Position 391 is a phosphoserine (Ser391). A compositionally biased stretch (basic and acidic residues) spans 396–414 (KVDKDDRLPQSDKDKRIVP). Residues Ser419, Ser421, and Ser455 each carry the phosphoserine modification. Thr457 carries the phosphothreonine modification. Positions 459–470 (SEIKDEKEKGDG) are enriched in basic and acidic residues. Over residues 476–502 (STASNTNSNNNSNNKSDNDAGATANAG) the composition is skewed to low complexity. The segment covering 503–513 (SGSGSGSGAGA) has biased composition (gly residues).

This sequence belongs to the histone deacetylase family. HD type 1 subfamily. As to quaternary structure, component of a form of the Esc/E(z) complex present specifically during early embryogenesis which is composed of Caf1-55, esc, E(z), Su(z)12, Pcl and HDAC1. The Esc/E(z) complex may also associate with Pcl and HDAC1 during early embryogenesis. This complex is distinct from the PRC1 complex, which contains many other PcG proteins like Pc, Ph, Psc, Su(z)2. The 2 complexes however cooperate and interact together during the first 3 hours of development to establish PcG silencing. Interacts with the histone methyltransferase Su(var)3-9. Component of a complex that contains at least HDAC1, CoRest and Su(var)3-3/Hdm. Component of the DREAM complex at least composed of Myb, Caf1-55, mip40, mip120, mip130, E2f2, Dp, Rbf, Rbf2, lin-52, HDAC1 and l(3)mbt. Interacts with the chromatin-remodeler Mi-2. Interacts with Rrp6.

The protein resides in the nucleus. It carries out the reaction N(6)-acetyl-L-lysyl-[histone] + H2O = L-lysyl-[histone] + acetate. Functionally, catalyzes the deacetylation of lysine residues on the N-terminal part of the core histones (H2A, H2B, H3 and H4). Histone deacetylation may constitute a tag for epigenetic repression and plays an important role in transcriptional regulation, cell cycle progression and developmental events. For instance, deacetylation of histone H3 may be a prerequisite for the subsequent recruitment of the histone methyltransferase Su(var)3-9 to histones. Involved in position-effect variegation (PEV). In the larval brain, part of a regulatory network including the transcriptional repressors klu, dpn and E(spl)mgamma-HLH which is required for type II neuroblast self-renewal and for maintaining erm in an inactive state in intermediate neural progenitors (INP). The chain is Histone deacetylase HDAC1 from Drosophila melanogaster (Fruit fly).